The primary structure comprises 222 residues: MARTATIKRDTNETKIQIALSLDGGFLAVEESIFKKRKIDDDDEHAKQATSSQVINVQSGIGFLDHMLHALAKHAGWSLIVECIGDLHIDDHHTAEDVGITLGIAFKQALGQVKGVKRFGSGFAPLDEALSRAVVDLSNRPFAVVELGLKREKIGDLSCEMIPHVLESFAQGAHITMHVDCLRGFNDHHRAESAFKALAVAIREAISSNGTNDVPSTKGVLF.

The protein belongs to the imidazoleglycerol-phosphate dehydratase family.

The enzyme catalyses D-erythro-1-(imidazol-4-yl)glycerol 3-phosphate = 3-(imidazol-4-yl)-2-oxopropyl phosphate + H2O. It participates in amino-acid biosynthesis; L-histidine biosynthesis; L-histidine from 5-phospho-alpha-D-ribose 1-diphosphate: step 6/9. The sequence is that of Imidazoleglycerol-phosphate dehydratase (HIS3) from Scheffersomyces stipitis (strain ATCC 58785 / CBS 6054 / NBRC 10063 / NRRL Y-11545) (Yeast).